The chain runs to 918 residues: Valine--tRNA ligase (918 aa).

Positions 50-60 (PNVTGSLHMGH) match the 'HIGH' region motif. Residues 548-552 (KMSKS) carry the 'KMSKS' region motif. Lys-551 lines the ATP pocket. Positions 849-883 (NDFVNLEALKDRLTKDLKKVNSDIETLNKRISNKN) form a coiled coil.

Belongs to the class-I aminoacyl-tRNA synthetase family. ValS type 1 subfamily. In terms of assembly, monomer.

It is found in the cytoplasm. The catalysed reaction is tRNA(Val) + L-valine + ATP = L-valyl-tRNA(Val) + AMP + diphosphate. Its function is as follows. Catalyzes the attachment of valine to tRNA(Val). As ValRS can inadvertently accommodate and process structurally similar amino acids such as threonine, to avoid such errors, it has a 'posttransfer' editing activity that hydrolyzes mischarged Thr-tRNA(Val) in a tRNA-dependent manner. This is Valine--tRNA ligase from Prochlorococcus marinus subsp. pastoris (strain CCMP1986 / NIES-2087 / MED4).